A 454-amino-acid polypeptide reads, in one-letter code: uncharacterized protein (454 aa).

Residues Met1–Ala21 form the signal peptide. A lipid anchor (N-palmitoyl cysteine) is attached at Cys22. Cys22 carries the S-diacylglycerol cysteine lipid modification. Over residues Ala55–Ser64 the composition is skewed to low complexity. Residues Ala55–Asn87 form a disordered region. The span at Asn65–Asn87 shows a compositional bias: polar residues.

The protein localises to the cell membrane. This is an uncharacterized protein from Mycoplasma pneumoniae (strain ATCC 29342 / M129 / Subtype 1) (Mycoplasmoides pneumoniae).